Reading from the N-terminus, the 536-residue chain is 2-isopropylmalate synthase (536 aa).

Positions 8–269 (IIIFDTTLRD…YYNPFLGRPV (262 aa)) constitute a Pyruvate carboxyltransferase domain. Residues D17, H208, H210, and N244 each contribute to the Mn(2+) site. Residues 408 to 536 (RLELVQVSCG…KEKAAVTSAS (129 aa)) are regulatory domain.

It belongs to the alpha-IPM synthase/homocitrate synthase family. LeuA type 1 subfamily. As to quaternary structure, homodimer. Requires Mn(2+) as cofactor.

It localises to the cytoplasm. It carries out the reaction 3-methyl-2-oxobutanoate + acetyl-CoA + H2O = (2S)-2-isopropylmalate + CoA + H(+). The protein operates within amino-acid biosynthesis; L-leucine biosynthesis; L-leucine from 3-methyl-2-oxobutanoate: step 1/4. In terms of biological role, catalyzes the condensation of the acetyl group of acetyl-CoA with 3-methyl-2-oxobutanoate (2-ketoisovalerate) to form 3-carboxy-3-hydroxy-4-methylpentanoate (2-isopropylmalate). This is 2-isopropylmalate synthase from Gloeothece citriformis (strain PCC 7424) (Cyanothece sp. (strain PCC 7424)).